The following is a 586-amino-acid chain: MNFNYHFIWSLVILSQISQVQAGFGDPREALAEIQQKHGKPCDCAGGYVSSPPINSLTTVSCSTHTAYSVTNSLKWQCVSTPTTPSNTHIGSCPGECNTISYDSVHASCYNHYQQCNIGNKTYLTATITGDRTPAIGDGNVPTVLGTSHNLITAGCPNGKKGQVVCWNSRPSVHISDGGGPQDKARDIIVNKKFEELHRSLFPELSYHPLALPEARGKEKIDAHTLDLLATVHSLLNASQPSLAEDCWLCLQSGDPVPLALPYNDTLCSNFACLSNHSCPLTPPFLVQPFNFTDSNCLYAHYQNNSFDIDVGLASFTNCSSYYNVSTASKPSNSLCAPNSSVFVCGNNKAYTYLPTNWTGSCVLATLLPDIDIIPGSEPVPIPAIDHFLGKAKRAIQLIPLFVGLGITTAVSTGAAGLGVSITQYTKLSHQLISDVQAISSTIQDLQDQVDSLAEVVLQNRRGLDLLTAEQGGICLALQEKCCFYANKSGIVRDKIKNLQDDLERRRRQLIDNPFWTSFHGFLPYVMPLLGPLLCLLLVLSFGPIIFNKLMTFIKHQIESIQAKPIQVHYHRLEQEDSGGSYLTLT.

Residues 1-22 form the signal peptide; the sequence is MNFNYHFIWSLVILSQISQVQA. Topologically, residues 23 to 526 are extracellular; it reads GFGDPREALA…TSFHGFLPYV (504 aa). 2 N-linked (GlcNAc...) asparagine; by host glycosylation sites follow: asparagine 120 and asparagine 237. The CXXC signature appears at 247-250; sequence CWLC. Cystine bridges form between cysteine 247–cysteine 250, cysteine 247–cysteine 483, and cysteine 475–cysteine 482. N-linked (GlcNAc...) asparagine; by host glycans are attached at residues asparagine 264, asparagine 276, asparagine 291, asparagine 304, asparagine 318, asparagine 324, asparagine 339, and asparagine 357. The interval 398-418 is fusion peptide; sequence LIPLFVGLGITTAVSTGAAGL. 2 coiled-coil regions span residues 419 to 469 and 479 to 515; these read GVSI…LLTA and QEKC…DNPF. Residues 458-474 form an immunosuppression region; that stretch reads LQNRRGLDLLTAEQGGI. The short motif at 475-483 is the CX6CC element; that stretch reads CLALQEKCC. N-linked (GlcNAc...) asparagine; by host glycosylation occurs at asparagine 487. The helical transmembrane segment at 527-547 threads the bilayer; sequence MPLLGPLLCLLLVLSFGPIIF. Residues 548–586 lie on the Cytoplasmic side of the membrane; it reads NKLMTFIKHQIESIQAKPIQVHYHRLEQEDSGGSYLTLT. The YXXL motif; contains endocytosis signal signature appears at 570–573; that stretch reads YHRL.

In terms of assembly, the mature envelope protein (Env) consists of a trimer of SU-TM heterodimers attached by a labile interchain disulfide bond. In terms of processing, specific enzymatic cleavages in vivo yield mature proteins. Envelope glycoproteins are synthesized as an inactive precursor that is N-glycosylated and processed likely by host cell furin or by a furin-like protease in the Golgi to yield the mature SU and TM proteins. The cleavage site between SU and TM requires the minimal sequence [KR]-X-[KR]-R. The R-peptide is released from the C-terminus of the cytoplasmic tail of the TM protein upon particle formation as a result of proteolytic cleavage by the viral protease. Cleavage of this peptide is required for TM to become fusogenic. The CXXC motif is highly conserved across a broad range of retroviral envelope proteins. It is thought to participate in the formation of a labile disulfide bond possibly with the CX6CC motif present in the transmembrane protein. Isomerization of the intersubunit disulfide bond to an SU intrachain disulfide bond is thought to occur upon receptor recognition in order to allow membrane fusion.

The protein localises to the virion membrane. It localises to the host cell membrane. In terms of biological role, the surface protein (SU) attaches the virus to the host cell by binding to its receptor. This interaction triggers the refolding of the transmembrane protein (TM) and is thought to activate its fusogenic potential by unmasking its fusion peptide. Fusion occurs at the host cell plasma membrane. The transmembrane protein (TM) acts as a class I viral fusion protein. Under the current model, the protein has at least 3 conformational states: pre-fusion native state, pre-hairpin intermediate state, and post-fusion hairpin state. During viral and target cell membrane fusion, the coiled coil regions (heptad repeats) assume a trimer-of-hairpins structure, positioning the fusion peptide in close proximity to the C-terminal region of the ectodomain. The formation of this structure appears to drive apposition and subsequent fusion of viral and target cell membranes. Membranes fusion leads to delivery of the nucleocapsid into the cytoplasm. The sequence is that of Envelope glycoprotein (env) from Mason-Pfizer monkey virus (MPMV).